Reading from the N-terminus, the 217-residue chain is Nascent polypeptide-associated complex subunit alpha-like protein 2 (217 aa).

Residues 1-81 (MSPPPAVVTE…SEKKSRKAML (81 aa)) form a disordered region. Positions 37–60 (PIVEDVKDDEDDDDDDEEEEDDDA) are enriched in acidic residues. The 66-residue stretch at 70–135 (SRSEKKSRKA…AKIEDLSSQL (66 aa)) folds into the NAC-A/B domain. Positions 178 to 215 (VEARDIDLVMTQAGVSRSKAVKALKSHDGDIVSAIMEL) constitute a UBA domain.

This sequence belongs to the NAC-alpha family.

In terms of biological role, may promote appropriate targeting of ribosome-nascent polypeptide complexes. The polypeptide is Nascent polypeptide-associated complex subunit alpha-like protein 2 (Arabidopsis thaliana (Mouse-ear cress)).